Here is a 65-residue protein sequence, read N- to C-terminus: Large ribosomal subunit protein uL30 (65 aa).

It belongs to the universal ribosomal protein uL30 family. Part of the 50S ribosomal subunit.

The polypeptide is Large ribosomal subunit protein uL30 (Mycobacterium bovis (strain ATCC BAA-935 / AF2122/97)).